The following is a 618-amino-acid chain: Grainyhead-like protein 1 homolog (618 aa).

Positions 1-91 (MTQEYDNKRP…EGEHPEPEHS (91 aa)) are transcription activation. A compositionally biased stretch (basic and acidic residues) spans 76 to 92 (SSAVKPEGEHPEPEHSK). Residues 76–100 (SSAVKPEGEHPEPEHSKRNSIPNVT) form a disordered region. Residue T208 is modified to Phosphothreonine. A Grh/CP2 DB domain is found at 248–474 (SGNNFEYTLE…DLDTQPVLFI (227 aa)). Interaction with DNA regions lie at residues 380 to 389 (TDFSSQKGVK) and 427 to 430 (RKIR).

It belongs to the grh/CP2 family. Grainyhead subfamily. In terms of assembly, binds DNA as homodimer. Homodimer, also forms heterodimers with GRHL2 or GRHL3. Methylation at Arg-9 and Lys-116 may be involved in regulating transcriptional activation. In terms of tissue distribution, isoform 1 is highly expressed in brain, pancreas, tonsil, placenta and kidney. Isoform 2 is highly expressed in brain and liver. Expression in the skin is confined to the suprabasal layers of the epidermis and to the hair follicles.

Its subcellular location is the nucleus. Transcription factor involved in epithelial development. Binds directly to the consensus DNA sequence 5'-AACCGGTT-3'. Important regulator of DSG1 in the context of hair anchorage and epidermal differentiation, participates in the maintenance of the skin barrier. There is no genetic interaction with GRHL3, nor functional cooperativity due to diverse target gene selectivity during epithelia development. May play a role in regulating glucose homeostasis and insulin signaling. This Mus musculus (Mouse) protein is Grainyhead-like protein 1 homolog.